Reading from the N-terminus, the 271-residue chain is Probable esterase D14L (271 aa).

Residue serine 96 is the Nucleophile of the active site. Active-site residues include aspartate 218 and histidine 247.

The protein belongs to the AB hydrolase superfamily. In terms of assembly, component of an intracellular receptor complex involved in the detection of the smoke compound karrikin. In terms of tissue distribution, expressed constitutively in all organs (e.g. roots, stems, leaves, panicles and embryos).

The protein localises to the nucleus. It localises to the cytoplasm. Its function is as follows. May be involved in strigolactone signaling pathway. Essential for plant responses to karrikins, a class of butenolide compounds, structurally similar to strigolactones, released from burning vegetation that stimulate seed germination and enhance seedling photomorphogenesis. Mediates a specific perception of karrikin. Required for the establishment of symbiosis with the arbuscular mycorrhizal fungi (AMF) Rhizophagus irregularis and Gigaspora rosea. Karrikin binding induces a conformational change. This Oryza sativa subsp. japonica (Rice) protein is Probable esterase D14L (D14L).